Here is a 296-residue protein sequence, read N- to C-terminus: 4-hydroxybenzoate octaprenyltransferase (296 aa).

A run of 9 helical transmembrane segments spans residues 29–49, 55–75, 102–122, 124–141, 146–166, 169–189, 216–236, 239–259, and 271–291; these read IGIY…AEGV, LFIF…INDY, ALVL…FTNA, TIWL…YPFM, FYPQ…AFTA, GSLP…TVAY, ADRL…LLAG, FELG…FVWE, and CFNA…GIVL.

Belongs to the UbiA prenyltransferase family. It depends on Mg(2+) as a cofactor.

The protein localises to the cell inner membrane. It carries out the reaction all-trans-octaprenyl diphosphate + 4-hydroxybenzoate = 4-hydroxy-3-(all-trans-octaprenyl)benzoate + diphosphate. The protein operates within cofactor biosynthesis; ubiquinone biosynthesis. Functionally, catalyzes the prenylation of para-hydroxybenzoate (PHB) with an all-trans polyprenyl group. Mediates the second step in the final reaction sequence of ubiquinone-8 (UQ-8) biosynthesis, which is the condensation of the polyisoprenoid side chain with PHB, generating the first membrane-bound Q intermediate 3-octaprenyl-4-hydroxybenzoate. The polypeptide is 4-hydroxybenzoate octaprenyltransferase (Ectopseudomonas mendocina (strain ymp) (Pseudomonas mendocina)).